Here is a 274-residue protein sequence, read N- to C-terminus: tRNA-cytidine(32) 2-sulfurtransferase (274 aa).

A PP-loop motif motif is present at residues 40–45 (SGGKDS). [4Fe-4S] cluster contacts are provided by cysteine 115, cysteine 118, and cysteine 206.

This sequence belongs to the TtcA family. Homodimer. The cofactor is Mg(2+). Requires [4Fe-4S] cluster as cofactor.

The protein localises to the cytoplasm. The enzyme catalyses cytidine(32) in tRNA + S-sulfanyl-L-cysteinyl-[cysteine desulfurase] + AH2 + ATP = 2-thiocytidine(32) in tRNA + L-cysteinyl-[cysteine desulfurase] + A + AMP + diphosphate + H(+). Its pathway is tRNA modification. In terms of biological role, catalyzes the ATP-dependent 2-thiolation of cytidine in position 32 of tRNA, to form 2-thiocytidine (s(2)C32). The sulfur atoms are provided by the cysteine/cysteine desulfurase (IscS) system. The sequence is that of tRNA-cytidine(32) 2-sulfurtransferase from Pseudomonas putida (strain W619).